A 367-amino-acid chain; its full sequence is Germination protease (367 aa).

Positions 1-15 (MKEPLDLSKYSVRTD) are excised as a propeptide.

This sequence belongs to the peptidase A25 family. Homotetramer. Autoproteolytically processed. The inactive tetrameric zymogen termed p46 autoprocesses to a smaller form termed p41, which is active only during spore germination.

The catalysed reaction is Endopeptidase action with P4 Glu or Asp, P1 preferably Glu &gt; Asp, P1' hydrophobic and P2' Ala.. Functionally, initiates the rapid degradation of small, acid-soluble proteins during spore germination. This is Germination protease from Bacillus thuringiensis subsp. konkukian (strain 97-27).